A 415-amino-acid chain; its full sequence is Serine hydroxymethyltransferase (415 aa).

(6S)-5,6,7,8-tetrahydrofolate contacts are provided by residues Leu117 and Gly121–Leu123. Lys226 is modified (N6-(pyridoxal phosphate)lysine). Residue Glu241 coordinates (6S)-5,6,7,8-tetrahydrofolate.

Belongs to the SHMT family. As to quaternary structure, homodimer. Pyridoxal 5'-phosphate is required as a cofactor.

The protein localises to the cytoplasm. The enzyme catalyses (6R)-5,10-methylene-5,6,7,8-tetrahydrofolate + glycine + H2O = (6S)-5,6,7,8-tetrahydrofolate + L-serine. It functions in the pathway one-carbon metabolism; tetrahydrofolate interconversion. It participates in amino-acid biosynthesis; glycine biosynthesis; glycine from L-serine: step 1/1. Its function is as follows. Catalyzes the reversible interconversion of serine and glycine with tetrahydrofolate (THF) serving as the one-carbon carrier. This reaction serves as the major source of one-carbon groups required for the biosynthesis of purines, thymidylate, methionine, and other important biomolecules. Also exhibits THF-independent aldolase activity toward beta-hydroxyamino acids, producing glycine and aldehydes, via a retro-aldol mechanism. This Bacillus velezensis (strain DSM 23117 / BGSC 10A6 / LMG 26770 / FZB42) (Bacillus amyloliquefaciens subsp. plantarum) protein is Serine hydroxymethyltransferase.